Reading from the N-terminus, the 444-residue chain is Probable glycolate oxidase iron-sulfur subunit (444 aa).

2 4Fe-4S ferredoxin-type domains span residues 14 to 46 and 69 to 100; these read FKER…GFQE and EDVE…LLEE. C26, C29, C32, C36, C78, C81, C84, and C88 together coordinate [4Fe-4S] cluster.

In terms of assembly, the glycolate oxidase likely consists of several subunits including GlcD and GlcF. The cofactor is [4Fe-4S] cluster.

Its subcellular location is the cell membrane. It carries out the reaction glycolate + A = glyoxylate + AH2. The catalysed reaction is (R)-lactate + A = pyruvate + AH2. Component of a complex that catalyzes the oxidation of glycolate to glyoxylate. Is also able to oxidize D-lactate ((R)-lactate). Does not link directly to O(2), and 2,6-dichloroindophenol (DCIP) and phenazine methosulfate (PMS) can act as artificial electron acceptors in vitro, but the physiological molecule that functions as primary electron acceptor during glycolate oxidation is unknown. The sequence is that of Probable glycolate oxidase iron-sulfur subunit (glcF) from Bacillus subtilis (strain 168).